The primary structure comprises 333 residues: Adenosine deaminase (333 aa).

Zn(2+)-binding residues include histidine 12 and histidine 14. Residues histidine 14, aspartate 16, and glycine 170 each contribute to the substrate site. A Zn(2+)-binding site is contributed by histidine 197. Residue glutamate 200 is the Proton donor of the active site. Position 278 (aspartate 278) interacts with Zn(2+). Aspartate 279 contacts substrate.

The protein belongs to the metallo-dependent hydrolases superfamily. Adenosine and AMP deaminases family. Adenosine deaminase subfamily. Requires Zn(2+) as cofactor.

The catalysed reaction is adenosine + H2O + H(+) = inosine + NH4(+). It catalyses the reaction 2'-deoxyadenosine + H2O + H(+) = 2'-deoxyinosine + NH4(+). Catalyzes the hydrolytic deamination of adenosine and 2-deoxyadenosine. The polypeptide is Adenosine deaminase (Shigella boydii serotype 4 (strain Sb227)).